Consider the following 281-residue polypeptide: Nuclear receptor-interacting protein 2 (281 aa).

The disordered stretch occupies residues 18–85 (ESCSTGQRQA…RAHLSQQRRL (68 aa)). Residues 36–47 (TPPPSSPWPTPP) show a composition bias toward pro residues. Residues 55 to 78 (QEARRDEGEARTRGQEAQLRDRAH) show a composition bias toward basic and acidic residues. An LXXLL motif motif is present at residues 244-248 (LQTLL).

In terms of assembly, interacts with NR1F2, RARA and THRB in a ligand-dependent manner.

It is found in the nucleus. Down-regulates transcriptional activation by nuclear receptors such as NR1F2. The polypeptide is Nuclear receptor-interacting protein 2 (NRIP2) (Homo sapiens (Human)).